The following is a 157-amino-acid chain: Protein Smg (157 aa).

The protein belongs to the Smg family.

The protein is Protein Smg of Escherichia coli O8 (strain IAI1).